A 297-amino-acid polypeptide reads, in one-letter code: Tryptophan 2,3-dioxygenase (297 aa).

Residues 51–55 (FIIQH), Y113, and R117 each bind substrate. A heme-binding site is contributed by H240. T254 serves as a coordination point for substrate.

The protein belongs to the tryptophan 2,3-dioxygenase family. As to quaternary structure, homotetramer. Requires heme as cofactor.

It carries out the reaction L-tryptophan + O2 = N-formyl-L-kynurenine. Its pathway is amino-acid degradation; L-tryptophan degradation via kynurenine pathway; L-kynurenine from L-tryptophan: step 1/2. Its function is as follows. Heme-dependent dioxygenase that catalyzes the oxidative cleavage of the L-tryptophan (L-Trp) pyrrole ring and converts L-tryptophan to N-formyl-L-kynurenine. Catalyzes the oxidative cleavage of the indole moiety. The polypeptide is Tryptophan 2,3-dioxygenase (Xanthomonas oryzae pv. oryzae (strain MAFF 311018)).